A 282-amino-acid polypeptide reads, in one-letter code: Snake venom serine protease BmSP (282 aa).

Residues 1–18 (MVLIGVLASLLILQLSYS) form the signal peptide. The propeptide occupies 19 to 56 (KSLDDGAKESAYDDEIQQSSWGNSTVNTTLTETVVIQL). N-linked (GlcNAc...) asparagine glycosylation is found at Asn41 and Asn45. A Peptidase S1 domain is found at 57 to 280 (IMGGSECYKS…YIDWIKGIIA (224 aa)). 5 cysteine pairs are disulfide-bonded: Cys63–Cys195, Cys82–Cys98, Cys174–Cys241, Cys206–Cys220, and Cys231–Cys256. The active-site Charge relay system is His97. The N-linked (GlcNAc...) asparagine glycan is linked to Asn135. Catalysis depends on Asp142, which acts as the Charge relay system. Asn149 and Asn153 each carry an N-linked (GlcNAc...) asparagine glycan. Ser235 serves as the catalytic Charge relay system.

The protein belongs to the peptidase S1 family. Snake venom subfamily. Monomer. Expressed by the venom gland.

Its subcellular location is the secreted. Its function is as follows. Snake venom serine protease that may act in the hemostasis system of the prey. This chain is Snake venom serine protease BmSP, found in Bungarus multicinctus (Many-banded krait).